Consider the following 882-residue polypeptide: Isoamylase 2, chloroplastic (882 aa).

Residues 1–70 constitute a chloroplast transit peptide; it reads MAAWSPSVGI…LQSYQFSKIC (70 aa).

It belongs to the glycosyl hydrolase 13 family. In terms of assembly, associates with ISA1 to form the heteromultimeric complex Iso1 required for amylopectin synthesis.

The protein localises to the plastid. Its subcellular location is the chloroplast. It participates in glycan biosynthesis; starch biosynthesis. Its function is as follows. Involved in the trimming of pre-amylopectin chains. Accelerates the crystallization of nascent amylopectin molecules during starch synthesis. ISA1 and ISA2 work exclusively together as a multimeric holoenzyme. ISA1-ISA2 removes preferentially branches that are very close to other branches. This is Isoamylase 2, chloroplastic (ISA2) from Arabidopsis thaliana (Mouse-ear cress).